Reading from the N-terminus, the 422-residue chain is Gamma-glutamyl phosphate reductase (422 aa).

It belongs to the gamma-glutamyl phosphate reductase family.

It localises to the cytoplasm. It catalyses the reaction L-glutamate 5-semialdehyde + phosphate + NADP(+) = L-glutamyl 5-phosphate + NADPH + H(+). It functions in the pathway amino-acid biosynthesis; L-proline biosynthesis; L-glutamate 5-semialdehyde from L-glutamate: step 2/2. Functionally, catalyzes the NADPH-dependent reduction of L-glutamate 5-phosphate into L-glutamate 5-semialdehyde and phosphate. The product spontaneously undergoes cyclization to form 1-pyrroline-5-carboxylate. This Chloroflexus aggregans (strain MD-66 / DSM 9485) protein is Gamma-glutamyl phosphate reductase.